We begin with the raw amino-acid sequence, 64 residues long: Large ribosomal subunit protein bL28 (64 aa).

It belongs to the bacterial ribosomal protein bL28 family.

This chain is Large ribosomal subunit protein bL28, found in Campylobacter jejuni subsp. doylei (strain ATCC BAA-1458 / RM4099 / 269.97).